A 313-amino-acid polypeptide reads, in one-letter code: Protein TIFY 4A (313 aa).

The tract at residues 118-149 (SPRSAEFSGGSGHFVSEKDGHKTTISPRSPAE) is disordered. The Tify domain occupies 150 to 185 (TSELVGQMTIFYSGKVNVYDGIPPEKARSIMHFAAN). Disordered regions lie at residues 220–256 (KANS…KAKK) and 281–313 (QNLG…SEGI). A Jas motif is present at residues 232–254 (QANRKVSLQRYREKRKDRKFSKA). The Nuclear localization signal signature appears at 234–241 (NRKVSLQR). Residues 243–256 (REKRKDRKFSKAKK) show a composition bias toward basic residues.

It belongs to the TIFY/JAZ family. Interacts with AFPH2/NINJA.

The protein resides in the nucleus. Functionally, regulates the arrest of dispersed meristematic cells during lamina development. The polypeptide is Protein TIFY 4A (TIFY4A) (Arabidopsis thaliana (Mouse-ear cress)).